A 419-amino-acid polypeptide reads, in one-letter code: Probable serine/threonine-protein kinase DDB_G0290859 (419 aa).

One can recognise a Protein kinase domain in the interval 40-387; that stretch reads YDIISTIGSG…ASTIKKHPFF (348 aa). ATP contacts are provided by residues 46–54 and lysine 69; that span reads IGSGSYGEV. Aspartate 173 functions as the Proton acceptor in the catalytic mechanism. The AGC-kinase C-terminal domain occupies 388–419; the sequence is EGINWEEMANFNVEPPFKPTLSSDDDISYFTN.

This sequence belongs to the protein kinase superfamily. AGC Ser/Thr protein kinase family.

The enzyme catalyses L-seryl-[protein] + ATP = O-phospho-L-seryl-[protein] + ADP + H(+). It carries out the reaction L-threonyl-[protein] + ATP = O-phospho-L-threonyl-[protein] + ADP + H(+). The polypeptide is Probable serine/threonine-protein kinase DDB_G0290859 (Dictyostelium discoideum (Social amoeba)).